A 517-amino-acid polypeptide reads, in one-letter code: Ribonuclease Y (517 aa).

A helical membrane pass occupies residues 1-21 (MIESLIALIAAIVGLGIGYLV). A KH domain is found at 207–273 (LINVINIKND…TKVIELLVED (67 aa)). The HD domain maps to 333 to 426 (ALAHSLEVAH…VCAADTLSAA (94 aa)).

The protein belongs to the RNase Y family.

It is found in the cell membrane. In terms of biological role, endoribonuclease that initiates mRNA decay. The sequence is that of Ribonuclease Y from Campylobacter jejuni subsp. jejuni serotype O:2 (strain ATCC 700819 / NCTC 11168).